A 419-amino-acid polypeptide reads, in one-letter code: MKNFNLLAVSSILLVDLFRTHWGHNVDFSKAINLNGVSFSNVDASSLGAAQVRQSASRGRGLGENPKEEDGADKKKKKDEKQVEPKKPRENKLKQPVENADGNAGGNAGGNAGGNAGGNAGGNADGNAGGNAGGNAGGNAGGNAGGNADGNAGGNADGNAGGNADGNAGGNAGGNAGGNADGNAGGNAGGNAGGNAGGNAGGNAGGNAGGNADGNAGGNAGGNAGGNADGNAGGNAGGNAGGNAGGNAGGTAGGNADGNAGGNAGGNAGGNAGGNAGGNAGGNAGGNAGGNAGGNAGGNAGGNAGGNAGANAGNKKAGDAGAGQGQNNEAANMPNVKLVKEYLDKIRSTISTEWSPCSVTCGKGVRMRKKVSAANKKPEELDVNDLETEVCTMDKCAGIFNVVSNSLRLVILLVLALFN.

The first 23 residues, 1–23 (MKNFNLLAVSSILLVDLFRTHWG), serve as a signal peptide directing secretion. The disordered stretch occupies residues 50-111 (AQVRQSASRG…GNAGGNAGGN (62 aa)). The span at 65–95 (NPKEEDGADKKKKKDEKQVEPKKPRENKLKQ) shows a compositional bias: basic and acidic residues. The tract at residues 81–89 (KQVEPKKPR) is required for the binding to heparan sulfate proteoglycans (HSPGs) on the surface of host hepatocytes. The segment at 92–96 (KLKQP) is region I; contains the proteolytic cleavage site. Tandem repeats lie at residues 99-102 (NADG), 103-106 (NAGG), 107-110 (NAGG), 111-114 (NAGG), 115-118 (NAGG), 119-122 (NAGG), 123-126 (NADG), 127-130 (NAGG), 131-134 (NAGG), 135-138 (NAGG), 139-142 (NAGG), 143-146 (NAGG), 147-150 (NADG), 151-154 (NAGG), 155-158 (NADG), 159-162 (NAGG), 163-166 (NADG), 167-170 (NAGG), 171-174 (NAGG), 175-178 (NAGG), 179-182 (NADG), 183-186 (NAGG), 187-190 (NAGG), 191-194 (NAGG), 195-198 (NAGG), 199-202 (NAGG), 203-206 (NAGG), 207-210 (NAGG), 211-214 (NADG), 215-218 (NAGG), 219-222 (NAGG), 223-226 (NAGG), 227-230 (NADG), 231-234 (NAGG), 235-238 (NAGG), 239-242 (NAGG), 243-246 (NAGG), and 247-250 (NAGG). The segment at 99–314 (NADGNAGGNA…GGNAGANAGN (216 aa)) is 54 X 4 AA approximate tandem repeats of N-A-G-G. The tract at residues 146–237 (GNADGNAGGN…ADGNAGGNAG (92 aa)) is disordered. Residues 251 to 254 (TAGG) form a 39; approximate repeat. 13 tandem repeats follow at residues 255-258 (NADG), 259-262 (NAGG), 263-266 (NAGG), 267-270 (NAGG), 271-274 (NAGG), 275-278 (NAGG), 279-282 (NAGG), 283-286 (NAGG), 287-290 (NAGG), 291-294 (NAGG), 295-298 (NAGG), 299-302 (NAGG), and 303-306 (NAGG). The stretch at 307–310 (NAGA) is one 53; approximate repeat. Residues 311 to 314 (NAGN) form a 54; approximate repeat. Positions 312-332 (AGNKKAGDAGAGQGQNNEAAN) are disordered. The region spanning 345–397 (KIRSTISTEWSPCSVTCGKGVRMRKKVSAANKKPEELDVNDLETEVCTMDKCA) is the TSP type-1 domain. 2 disulfide bridges follow: Cys-357-Cys-391 and Cys-361-Cys-396. Residue Thr-360 is glycosylated (O-linked (Fuc) threonine). Cys-396 carries GPI-anchor amidated cysteine lipidation. Positions 397-419 (AGIFNVVSNSLRLVILLVLALFN) are cleaved as a propeptide — removed in mature form.

This sequence belongs to the plasmodium circumsporozoite protein family. During host cell invasion, proteolytically cleaved at the cell membrane in the region I by a papain-like cysteine protease of parasite origin. Cleavage is triggered by the sporozoite contact with highly sulfated heparan sulfate proteoglycans (HSPGs) present on the host hepatocyte cell surface. Cleavage exposes the TSP type-1 (TSR) domain and is required for productive invasion of host hepatocytes but not for adhesion to the host cell membrane. Cleavage is dispensable for sporozoite development in the oocyst, motility and for traversal of host and vector cells. In terms of processing, O-glycosylated; maybe by POFUT2.

The protein resides in the cell membrane. It localises to the cytoplasm. Its function is as follows. Essential sporozoite protein. In the mosquito vector, required for sporozoite development in the oocyst, migration through the vector hemolymph and entry into the vector salivary glands. In the vertebrate host, required for sporozoite migration through the host dermis and infection of host hepatocytes. Binds to highly sulfated heparan sulfate proteoglycans (HSPGs) on the surface of host hepatocytes. In terms of biological role, in the vertebrate host, binds to highly sulfated heparan sulfate proteoglycans (HSPGs) on the surface of host hepatocytes and is required for sporozoite invasion of the host hepatocytes. The chain is Circumsporozoite protein from Plasmodium cynomolgi (strain Mulligan/NIH).